Consider the following 170-residue polypeptide: Gas vesicle protein A2 (170 aa).

The tract at residues 86–170 (SPMAKTVGRA…PRRRTEEEDR (85 aa)) is disordered. 2 stretches are compositionally biased toward basic and acidic residues: residues 104–119 (LTDK…HEHE) and 127–137 (DRPRAGAERGR). Residues 138–148 (STQRPRSRPAA) show a composition bias toward basic residues. A compositionally biased stretch (basic and acidic residues) spans 149 to 170 (RPRDEDDRPRSRPRRRTEEEDR).

This sequence belongs to the gas vesicle GvpA family. In terms of assembly, the gas vesicle shell is 2 nm thick and consists of a single layer of this protein. It forms helical ribs nearly perpendicular to the long axis of the vesicle.

The protein localises to the gas vesicle shell. Gas vesicles are hollow, gas filled proteinaceous nanostructures found in some microorganisms. During planktonic growth they allow positioning of the organism at a favorable depth for light or nutrient acquisition. GvpA forms the protein shell. It is not clear what function GVs perform in soil bacteria. This is Gas vesicle protein A2 from Streptomyces coelicolor (strain ATCC BAA-471 / A3(2) / M145).